A 443-amino-acid chain; its full sequence is Magnesium transporter MRS2-10 (443 aa).

The segment at 1–33 (MSELKERLLPPRPASAINLRGDAGSRPSPSGRQ) is disordered. A run of 2 helical transmembrane segments spans residues 379–399 (LLLT…GIFG) and 415–435 (WVLA…LWYY). The Required for magnesium transport activity motif lies at 399–401 (GMN).

The protein belongs to the CorA metal ion transporter (MIT) (TC 1.A.35.5) family. In terms of tissue distribution, expressed in the whole plant.

The protein localises to the cell membrane. In terms of biological role, high-affinity magnesium transporter that mediates the influx of magnesium. Involved in tolerance to Aluminum. This Arabidopsis thaliana (Mouse-ear cress) protein is Magnesium transporter MRS2-10 (MRS2-10).